The following is a 207-amino-acid chain: MLRSLVQNPRVRARVLERVDEFRLNNLSNEEVWFRELTLCLLTANSSFISAYQALNCLGDKIYYANEEVIRSILKSCKYRFYNLKAKYIIMAREKVYGKLKEEITPLADSDQQLAREKLLNIKGIGMKEASHFLRNVGYFDLAIIDRHLIDFMRRIGAIGEINVKHLSKSRYISLESVLKSIALNLNISVGILDLFIWYKETNTIVK.

Active-site residues include Lys-128 and Asp-146.

Belongs to the type-2 OGG1 family.

The enzyme catalyses 2'-deoxyribonucleotide-(2'-deoxyribose 5'-phosphate)-2'-deoxyribonucleotide-DNA = a 3'-end 2'-deoxyribonucleotide-(2,3-dehydro-2,3-deoxyribose 5'-phosphate)-DNA + a 5'-end 5'-phospho-2'-deoxyribonucleoside-DNA + H(+). Its function is as follows. Catalyzes the excision of an oxidatively damaged form of guanine (7,8-dihydro-8-oxoguanine = 8-oxoG) from DNA. Also cleaves the DNA backbone at apurinic/apyrimidinic sites (AP sites). This chain is 8-oxoguanine DNA glycosylase/AP lyase, found in Saccharolobus islandicus (strain Y.N.15.51 / Yellowstone #2) (Sulfolobus islandicus).